The following is a 119-amino-acid chain: Fluoride-specific ion channel FluC (119 aa).

A run of 4 helical transmembrane segments spans residues 5 to 25, 30 to 50, 59 to 79, and 97 to 117; these read IIPL…LNLA, IPPA…IGIF, WKLL…GFSL, and IFLH…IGAA. Gly69 and Thr72 together coordinate Na(+).

It belongs to the fluoride channel Fluc/FEX (TC 1.A.43) family.

Its subcellular location is the cell inner membrane. The enzyme catalyses fluoride(in) = fluoride(out). Its activity is regulated as follows. Na(+) is not transported, but it plays an essential structural role and its presence is essential for fluoride channel function. In terms of biological role, fluoride-specific ion channel. Important for reducing fluoride concentration in the cell, thus reducing its toxicity. This chain is Fluoride-specific ion channel FluC, found in Neisseria meningitidis serogroup B (strain ATCC BAA-335 / MC58).